Reading from the N-terminus, the 1361-residue chain is Pre-mRNA-splicing factor RSE1 (1361 aa).

Disordered regions lie at residues 788–811 (NNEEEEEEEEDDDDEKEEEEINSS) and 893–912 (VNKQENGGGDESNEEEEDEM). 2 stretches are compositionally biased toward acidic residues: residues 789–808 (NEEEEEEEEDDDDEKEEEEI) and 903–912 (ESNEEEEDEM).

Belongs to the RSE1 family. As to quaternary structure, belongs to the SF3B complex, a U2 associated sub-complex of the spliceosome. The SF3B complex is composed of at least CUS1, HSH49, HSH155, RDS3 and RSE1. Also belongs to the CWC complex (or CEF1-associated complex), a spliceosome sub-complex reminiscent of a late-stage spliceosome composed of the U2, U5 and U6 snRNAs and at least BUD13, BUD31, BRR2, CDC40, CEF1, CLF1, CUS1, CWC2, CWC15, CWC21, CWC22, CWC23, CWC24, CWC25, CWC27, ECM2, HSH155, IST3, ISY1, LEA1, MSL1, NTC20, PRP8, PRP9, PRP11, PRP19, PRP21, PRP22, PRP45, PRP46, SLU7, SMB1, SMD1, SMD2, SMD3, SMX2, SMX3, SNT309, SNU114, SPP2, SYF1, SYF2, RSE1 and YJU2. Interacts with RDS3.

It localises to the nucleus. In terms of biological role, involved in G2/M transition. Required for pre-mRNA splicing and endoplasmic reticulum (ER) to Golgi secretion pathway. U2 snRNPs associated protein required for the pre-spliceosome assembly. The involvement in ER to Golgi secretion is probably indirect and due to the splicing of the pre-mRNA coding for SAR1, a small GTP-binding protein required for COPII vesicle formation from the ER. The chain is Pre-mRNA-splicing factor RSE1 (RSE1) from Saccharomyces cerevisiae (strain ATCC 204508 / S288c) (Baker's yeast).